Here is a 219-residue protein sequence, read N- to C-terminus: uncharacterized protein (219 aa).

Residues 1-22 (MKKRRKICYCNTALLLMILLAG) form the signal peptide. Cys-23 is lipidated: N-palmitoyl cysteine. The S-diacylglycerol cysteine moiety is linked to residue Cys-23. A disordered region spans residues 26 to 89 (SKDGEAQQPS…SAEEKSKEDN (64 aa)). Positions 32–42 (QQPSNQASAVQ) are enriched in polar residues. Residues 43 to 61 (TDEKHTEPEESTKIRKDEA) are compositionally biased toward basic and acidic residues.

Its subcellular location is the cell membrane. This is an uncharacterized protein from Bacillus subtilis (strain 168).